Here is a 284-residue protein sequence, read N- to C-terminus: Protein-S-isoprenylcysteine O-methyltransferase (284 aa).

The Cytoplasmic portion of the chain corresponds to 1–16 (MAGCAARVPPGSEARL). A helical membrane pass occupies residues 17–33 (SLATFLLGASVLALPLL). Residues 34–41 (TRAGLQGR) lie on the Lumenal side of the membrane. Residues 42–59 (TGLALYVAGLNALLLLLY) traverse the membrane as a helical segment. Residues 60–69 (RPPRYQIAIR) lie on the Cytoplasmic side of the membrane. A helical transmembrane segment spans residues 70–87 (ACFLGFVFGCGVLLSFSQ). Over 88–92 (SSWNH) the chain is Lumenal. The chain crosses the membrane as a helical span at residues 93 to 112 (FGWYVCSLSLFHYSEYLVTA). Over 113–131 (VNNPKSLSLDSFLLNHSLE) the chain is Cytoplasmic. The helical transmembrane segment at 132–149 (YTVAALSSWIEFTLENIF) threads the bilayer. At 150–154 (WPELK) the chain is on the lumenal side. The chain crosses the membrane as a helical span at residues 155–174 (QITWLSAAGLLMVIFGECLR). The Cytoplasmic portion of the chain corresponds to 175-212 (KVAMFTAGSNFNHVVQSEKSDTHTLVTSGVYAWCRHPS). S-adenosyl-L-methionine-binding positions include Q190, 197–200 (HTLV), Y205, and 210–213 (HPSY). Residues 213–228 (YVGWFYWSIGTQVMLC) form a helical membrane-spanning segment. A topological domain (lumenal) is located at residue N229. Residues 230-244 (PICGVVYALTVWRFF) form a helical membrane-spanning segment. Residues 245–284 (RDRTEEEEISLIHFFGEEYLDYKKRVPTGLPFIKGVKVGL) lie on the Cytoplasmic side of the membrane. R247 is a binding site for substrate. E251 provides a ligand contact to S-adenosyl-L-methionine.

This sequence belongs to the class VI-like SAM-binding methyltransferase superfamily. Isoprenylcysteine carboxyl methyltransferase family.

The protein resides in the endoplasmic reticulum membrane. The catalysed reaction is [protein]-C-terminal S-[(2E,6E)-farnesyl]-L-cysteine + S-adenosyl-L-methionine = [protein]-C-terminal S-[(2E,6E)-farnesyl]-L-cysteine methyl ester + S-adenosyl-L-homocysteine. Its function is as follows. Catalyzes the post-translational methylation of isoprenylated C-terminal cysteine residues. The sequence is that of Protein-S-isoprenylcysteine O-methyltransferase from Rattus norvegicus (Rat).